The sequence spans 521 residues: Ribonuclease Y 1 (521 aa).

A helical transmembrane segment spans residues 1–21 (MEIVISAIIGLLIGGTVVFVI). A disordered region spans residues 51–87 (IKKESENKAKDFESRARKNVEQDIHKQKSTLKNKESQ). The region spanning 211 to 271 (TVSVLALPND…VRRELARRTI (61 aa)) is the KH domain. Residues 337 to 430 (ALNQSLEVAT…VHAAYTLSSS (94 aa)) enclose the HD domain.

Belongs to the RNase Y family.

Its subcellular location is the cell membrane. Functionally, endoribonuclease that initiates mRNA decay. The protein is Ribonuclease Y 1 of Bdellovibrio bacteriovorus (strain ATCC 15356 / DSM 50701 / NCIMB 9529 / HD100).